The chain runs to 423 residues: MLWRNEITEFMDQLSKYSQEILKTFKQLRPSEYKQYNEFLTQVTSLLQKTPEKIPELVDHIFNYLDNVEKICELLVNASSIIISSKIREQVKHGMSFSYKADLDSLADVLSQKQYVLMNLSKNIAAQYFNTCLKQGKSRLDLKAASVFYNSRPRTASSAELYRKMLYAYGSLQEINYYTEKARNKTLDVEESDSMAIIERTARHNLSLMHPLEAMGLTFGATNTDADPEDLKNKTVINLTLPQATESITYHLKSLMQLKKVSTASGLNTNILKAFDNIISTPVKKNKMASKLAPGMDVVFTSDNGKTFFTKNILSKNMLAGPKERVFAYNNLINNLNNSCFIQNHTDFLKQQDSWPFYDAHNFTNKFLMQPIFSGQTRPRLQGAMEAAHVETHLTAFLQSIQPSRPQDPSVLASPKLSALILN.

This sequence belongs to the asfivirus E423R family.

It is found in the virion. This is an uncharacterized protein from African swine fever virus (isolate Tick/Malawi/Lil 20-1/1983) (ASFV).